The chain runs to 206 residues: 2,3-bisphosphoglycerate-dependent phosphoglycerate mutase (206 aa).

Substrate is bound by residues 9–16 (RHGQSEWN), 22–23 (TG), R61, 88–91 (ERDY), K99, 115–116 (RR), and 159–160 (GN). The Tele-phosphohistidine intermediate role is filled by H10. The active-site Proton donor/acceptor is the E88.

It belongs to the phosphoglycerate mutase family. BPG-dependent PGAM subfamily. Homodimer.

The enzyme catalyses (2R)-2-phosphoglycerate = (2R)-3-phosphoglycerate. It functions in the pathway carbohydrate degradation; glycolysis; pyruvate from D-glyceraldehyde 3-phosphate: step 3/5. Catalyzes the interconversion of 2-phosphoglycerate and 3-phosphoglycerate. In Chelativorans sp. (strain BNC1), this protein is 2,3-bisphosphoglycerate-dependent phosphoglycerate mutase.